A 96-amino-acid chain; its full sequence is NADH-quinone oxidoreductase subunit K (96 aa).

The next 3 membrane-spanning stretches (helical) occupy residues 1–21 (MNYI…VLVR), 25–45 (IIVF…FVAF), and 56–76 (VIAF…LAII).

Belongs to the complex I subunit 4L family. In terms of assembly, NDH-1 is composed of 14 different subunits. Subunits NuoA, H, J, K, L, M, N constitute the membrane sector of the complex.

It localises to the cell membrane. It catalyses the reaction a quinone + NADH + 5 H(+)(in) = a quinol + NAD(+) + 4 H(+)(out). In terms of biological role, NDH-1 shuttles electrons from NADH, via FMN and iron-sulfur (Fe-S) centers, to quinones in the respiratory chain. The immediate electron acceptor for the enzyme in this species is believed to be a menaquinone. Couples the redox reaction to proton translocation (for every two electrons transferred, four hydrogen ions are translocated across the cytoplasmic membrane), and thus conserves the redox energy in a proton gradient. This Thermobifida fusca (strain YX) protein is NADH-quinone oxidoreductase subunit K.